The following is a 407-amino-acid chain: MNQFNKVCVIGLGYIGLPTAAIFASRKIKVIGVDINQNIVDIINKGKIHIVEPGLDILVHMVVNDGYLKATTLPEEADAFIIAVPTPFKGDNHEPNLDYIEMASKAIAKVLKKGNLVILESTSPVGTTEQMAKWLAEERSDLSFPHQCGEVSDIKIAHCPERVLPGQVIRELVENDRIIGGMTQKCAEYAIRLYKIFVQGECIMTNARTAEMTKLTENSFRDLNIAFANELSILCDKLDINVWELIKLANRHPRVNILQPGCGVGGHCIAVDPWFIVYQNPNEAKIIKTAREVNDNKPNFVVQKIKKKIKDILGPKIACLGLAFKPDIDDLRESPALDIVIKLASENASQILVVEPNIKQLPLKLQNKRNIKLVCLSQALDEADVVAVLVRHKEFIEVQSDKVVSFC.

Belongs to the UDP-glucose/GDP-mannose dehydrogenase family.

The catalysed reaction is UDP-N-acetyl-alpha-D-mannosamine + 2 NAD(+) + H2O = UDP-N-acetyl-alpha-D-mannosaminouronate + 2 NADH + 3 H(+). Its pathway is capsule biogenesis; capsule polysaccharide biosynthesis. In terms of biological role, dehydrogenase involved in the biosynthesis of capsular polysaccharides. Catalyzes the NAD(+)-dependent oxidation of UDP-N-acetyl-D-mannosamine (UDP-ManNAc) to UDP-N-acetyl-D-mannosaminuronic acid (UDP-ManNAcA). The sequence is that of UDP-N-acetyl-D-mannosamine dehydrogenase from Campylobacter jejuni.